The primary structure comprises 322 residues: Corticotropin-releasing factor-binding protein (322 aa).

The N-terminal stretch at 1 to 24 (MSPNFKLQCHFTLILLTALRGESR) is a signal peptide. 5 disulfide bridges follow: Cys-60-Cys-81, Cys-104-Cys-141, Cys-183-Cys-205, Cys-237-Cys-264, and Cys-277-Cys-318. N-linked (GlcNAc...) asparagine glycosylation is present at Asn-204.

This sequence belongs to the CRF-binding protein family.

It localises to the secreted. Its function is as follows. Binds CRF and inactivates it. May prevent inappropriate pituitary-adrenal stimulation in pregnancy. This is Corticotropin-releasing factor-binding protein (Crhbp) from Rattus norvegicus (Rat).